Consider the following 170-residue polypeptide: Protein SprT (170 aa).

One can recognise a SprT-like domain in the interval 22–163 (LQQANLTLQT…RCRRCGKTLR (142 aa)). Histidine 78 lines the Zn(2+) pocket. Glutamate 79 is a catalytic residue. Histidine 82 provides a ligand contact to Zn(2+).

Belongs to the SprT family. Zn(2+) serves as cofactor.

The protein localises to the cytoplasm. The polypeptide is Protein SprT (Pectobacterium carotovorum subsp. carotovorum (strain PC1)).